The primary structure comprises 180 residues: Dual-action ribosomal maturation protein DarP (180 aa).

It belongs to the DarP family.

The protein resides in the cytoplasm. Member of a network of 50S ribosomal subunit biogenesis factors which assembles along the 30S-50S interface, preventing incorrect 23S rRNA structures from forming. Promotes peptidyl transferase center (PTC) maturation. The polypeptide is Dual-action ribosomal maturation protein DarP (Pasteurella multocida (strain Pm70)).